Consider the following 148-residue polypeptide: Deoxyuridine 5'-triphosphate nucleotidohydrolase (148 aa).

Substrate-binding positions include 68 to 70, asparagine 81, 85 to 87, and lysine 95; these read RSG and TID.

The protein belongs to the dUTPase family. Mg(2+) serves as cofactor.

The catalysed reaction is dUTP + H2O = dUMP + diphosphate + H(+). It functions in the pathway pyrimidine metabolism; dUMP biosynthesis; dUMP from dCTP (dUTP route): step 2/2. Its function is as follows. This enzyme is involved in nucleotide metabolism: it produces dUMP, the immediate precursor of thymidine nucleotides and it decreases the intracellular concentration of dUTP so that uracil cannot be incorporated into DNA. In Rickettsia peacockii (strain Rustic), this protein is Deoxyuridine 5'-triphosphate nucleotidohydrolase.